The following is a 415-amino-acid chain: ER-derived vesicles protein ERV46 (415 aa).

The Cytoplasmic segment spans residues 1–24 (MKRSTLLSLDAFAKTEEDVRVRTR). Residues 25–45 (AGGLITLSCILTTLFLLVNEW) form a helical membrane-spanning segment. The Lumenal portion of the chain corresponds to 46–376 (GQFNSVVTRP…VINKEQHGQT (331 aa)). Residues 377-397 (WSGFILNCITSIGGVLAVGTV) form a helical membrane-spanning segment. The Cytoplasmic segment spans residues 398-415 (MDKLFYKAQRSIWGKKSQ). Residues 402 to 403 (FY) carry the Phenylalanine-tyrosine motif motif.

It belongs to the ERGIC family. In terms of assembly, interacts with ERV41.

The protein resides in the endoplasmic reticulum membrane. Its subcellular location is the golgi apparatus membrane. Its function is as follows. Constituent of COPII-coated endoplasmic reticulum-derived transport vesicles. Required for efficient transport of a subset of secretory proteins to the Golgi. The C-terminal Phe-Tyr motif is required for exit from the endoplasmic reticulum. Facilitates retrograde transport from the Golgi to the endoplasmic reticulum. The sequence is that of ER-derived vesicles protein ERV46 (ERV46) from Saccharomyces cerevisiae (strain ATCC 204508 / S288c) (Baker's yeast).